The primary structure comprises 409 residues: Probable ATP-dependent RNA helicase MG308 homolog (409 aa).

The 154-residue stretch at 26-179 folds into the Helicase ATP-binding domain; the sequence is VFKVWPRQNV…RKQVAPLTVV (154 aa). 39–46 provides a ligand contact to ATP; it reads AETGSGKT. Residues 126–129 carry the DEVD box motif; that stretch reads DEVD. In terms of domain architecture, Helicase C-terminal spans 190-349; it reads LVKHFLLNLN…SVHLERDGTL (160 aa).

Belongs to the DEAD box helicase family.

The enzyme catalyses ATP + H2O = ADP + phosphate + H(+). In Mycoplasma pneumoniae (strain ATCC 29342 / M129 / Subtype 1) (Mycoplasmoides pneumoniae), this protein is Probable ATP-dependent RNA helicase MG308 homolog.